Here is a 275-residue protein sequence, read N- to C-terminus: 3-methyl-2-oxobutanoate hydroxymethyltransferase (275 aa).

2 residues coordinate Mg(2+): Asp51 and Asp90. Residues 51-52 (DS), Asp90, and Lys120 each bind 3-methyl-2-oxobutanoate. Glu122 contacts Mg(2+). Glu189 serves as the catalytic Proton acceptor.

The protein belongs to the PanB family. In terms of assembly, homodecamer; pentamer of dimers. The cofactor is Mg(2+).

Its subcellular location is the cytoplasm. The catalysed reaction is 3-methyl-2-oxobutanoate + (6R)-5,10-methylene-5,6,7,8-tetrahydrofolate + H2O = 2-dehydropantoate + (6S)-5,6,7,8-tetrahydrofolate. It functions in the pathway cofactor biosynthesis; (R)-pantothenate biosynthesis; (R)-pantoate from 3-methyl-2-oxobutanoate: step 1/2. Functionally, catalyzes the reversible reaction in which hydroxymethyl group from 5,10-methylenetetrahydrofolate is transferred onto alpha-ketoisovalerate to form ketopantoate. The sequence is that of 3-methyl-2-oxobutanoate hydroxymethyltransferase from Caulobacter vibrioides (strain ATCC 19089 / CIP 103742 / CB 15) (Caulobacter crescentus).